Here is a 92-residue protein sequence, read N- to C-terminus: Acylphosphatase (92 aa).

The cysteines at positions 5 and 49 are disulfide-linked. Positions 5–92 constitute an Acylphosphatase-like domain; that stretch reads CIIAWVYGRV…SGELTDFRIR (88 aa). Active-site residues include Arg-20 and Asn-38.

It belongs to the acylphosphatase family.

The catalysed reaction is an acyl phosphate + H2O = a carboxylate + phosphate + H(+). This is Acylphosphatase from Escherichia coli O6:H1 (strain CFT073 / ATCC 700928 / UPEC).